The chain runs to 280 residues: 2-dehydro-3-deoxyphosphooctonate aldolase (280 aa).

The protein belongs to the KdsA family.

It localises to the cytoplasm. The enzyme catalyses D-arabinose 5-phosphate + phosphoenolpyruvate + H2O = 3-deoxy-alpha-D-manno-2-octulosonate-8-phosphate + phosphate. It participates in carbohydrate biosynthesis; 3-deoxy-D-manno-octulosonate biosynthesis; 3-deoxy-D-manno-octulosonate from D-ribulose 5-phosphate: step 2/3. It functions in the pathway bacterial outer membrane biogenesis; lipopolysaccharide biosynthesis. The chain is 2-dehydro-3-deoxyphosphooctonate aldolase from Nitrosococcus oceani (strain ATCC 19707 / BCRC 17464 / JCM 30415 / NCIMB 11848 / C-107).